The primary structure comprises 198 residues: Carnitine operon protein CaiE (198 aa).

The disordered stretch occupies residues 179–198 (VEENRPRLKGTTDVKPKSAQ). The segment covering 180–198 (EENRPRLKGTTDVKPKSAQ) has biased composition (basic and acidic residues).

Belongs to the transferase hexapeptide repeat family.

Its pathway is amine and polyamine metabolism; carnitine metabolism. Its function is as follows. Overproduction of CaiE stimulates the activity of CaiB and CaiD. This chain is Carnitine operon protein CaiE, found in Salmonella choleraesuis (strain SC-B67).